The following is a 334-amino-acid chain: Ribosomal RNA small subunit methyltransferase H (334 aa).

Residues 53–55 (GGH), aspartate 72, phenylalanine 99, aspartate 122, and histidine 129 each bind S-adenosyl-L-methionine.

It belongs to the methyltransferase superfamily. RsmH family.

The protein resides in the cytoplasm. The catalysed reaction is cytidine(1402) in 16S rRNA + S-adenosyl-L-methionine = N(4)-methylcytidine(1402) in 16S rRNA + S-adenosyl-L-homocysteine + H(+). In terms of biological role, specifically methylates the N4 position of cytidine in position 1402 (C1402) of 16S rRNA. This chain is Ribosomal RNA small subunit methyltransferase H, found in Leptospira interrogans serogroup Icterohaemorrhagiae serovar Lai (strain 56601).